We begin with the raw amino-acid sequence, 1370 residues long: Insulin-like growth factor 1 receptor (1370 aa).

The N-terminal stretch at 1–30 (MKSGSGGGSPTSLWGLVFLSAALSLWPTSG) is a signal peptide. Residues C33 and C52 are joined by a disulfide bond. 3 N-linked (GlcNAc...) asparagine glycosylation sites follow: N51, N102, and N135. 13 cysteine pairs are disulfide-bonded: C150–C178, C182–C205, C192–C211, C215–C224, C219–C230, C231–C239, C235–C248, C251–C260, C264–C276, C282–C303, C307–C321, C324–C328, and C332–C354. N245 is a glycosylation site (N-linked (GlcNAc...) asparagine). N314 is a glycosylation site (N-linked (GlcNAc...) asparagine). N-linked (GlcNAc...) asparagine glycans are attached at residues N418 and N439. Residues C456 and C489 are joined by a disulfide bond. Fibronectin type-III domains lie at 490-610 (ESDV…TNAS) and 611-709 (VPSI…TEAE). 9 N-linked (GlcNAc...) asparagine glycosylation sites follow: N535, N608, N623, N641, N748, N757, N765, N901, and N914. Over 742–936 (DVLQVANTTM…AKTTYENFMH (195 aa)) the chain is Extracellular. The Fibronectin type-III 3 domain maps to 835 to 928 (IPGPVTWEPR…DPVFFYVPAK (94 aa)). A helical transmembrane segment spans residues 937–960 (LIIALPVAILLIVGGLVIMLYVFH). The Cytoplasmic portion of the chain corresponds to 961-1370 (RKRNNSRLGN…ALPLPQSSTC (410 aa)). The IRS1- and SHC1-binding signature appears at 978-981 (NPEY). Y981 bears the Phosphotyrosine mark. One can recognise a Protein kinase domain in the interval 1000–1275 (ITMNRELGQG…SIKDEMEPSF (276 aa)). ATP is bound by residues 1006 to 1014 (LGQGSFGMV) and K1034. D1136 functions as the Proton acceptor in the catalytic mechanism. 3 positions are modified to phosphotyrosine; by autocatalysis: Y1162, Y1166, and Y1167. Residues K1169 and K1172 each participate in a glycyl lysine isopeptide (Lys-Gly) (interchain with G-Cter in ubiquitin) cross-link. S1279 carries the post-translational modification Phosphoserine; by GSK3-beta. Residue S1283 is modified to Phosphoserine. The segment at 1304-1370 (NMESVPLDPS…ALPLPQSSTC (67 aa)) is disordered. Residues 1305–1321 (MESVPLDPSASSASLPL) show a composition bias toward low complexity. A compositionally biased stretch (basic and acidic residues) spans 1322 to 1331 (PERHSGHKAE).

It belongs to the protein kinase superfamily. Tyr protein kinase family. Insulin receptor subfamily. As to quaternary structure, tetramer of 2 alpha and 2 beta chains linked by disulfide bonds. The alpha chains contribute to the formation of the ligand-binding domain, while the beta chain carries the kinase domain. Interacts with PIK3R1 and with the PTB/PID domains of IRS1 and SHC1 in vitro when autophosphorylated on tyrosine residues. Forms a hybrid receptor with INSR, the hybrid is a tetramer consisting of 1 alpha chain and 1 beta chain of INSR and 1 alpha chain and 1 beta chain of IGF1R. Interacts with ARRB1 and ARRB2. Interacts with GRB10. Interacts with RACK1. Interacts with SOCS1, SOCS2 and SOCS3. Interacts with 14-3-3 proteins. Interacts with NMD2. Interacts with MAP3K5. Interacts with STAT3. Found in a ternary complex with IGF1 and ITGAV:ITGB3 or ITGA6:ITGB4. Interacts (nascent precursor form) with ZFAND2B. Post-translationally, autophosphorylated on tyrosine residues in response to ligand binding. Autophosphorylation occurs in trans, i.e. one subunit of the dimeric receptor phosphorylates tyrosine residues on the other subunit. Autophosphorylation occurs in a sequential manner; Tyr-1166 is predominantly phosphorylated first, followed by phosphorylation of Tyr-1162 and Tyr-1167. While every single phosphorylation increases kinase activity, all three tyrosine residues in the kinase activation loop (Tyr-1162, Tyr-1166 and Tyr-1167) have to be phosphorylated for optimal activity. Can be autophosphorylated at additional tyrosine residues (in vitro). Autophosphorylated is followed by phosphorylation of juxtamembrane tyrosines and C-terminal serines. May also be phosphorylated at Tyr-1162 and Tyr-1167 by mTORC2. Phosphorylation of Tyr-981 is required for IRS1- and SHC1-binding. Phosphorylation of Ser-1279 by GSK-3beta restrains kinase activity and promotes cell surface expression, it requires a priming phosphorylation at Ser-1283. Dephosphorylated by PTPN1. In terms of processing, polyubiquitinated at Lys-1169 and Lys-1172 through both 'Lys-48' and 'Lys-29' linkages, promoting receptor endocytosis and subsequent degradation by the proteasome. Ubiquitination is facilitated by pre-existing phosphorylation. Sumoylated with SUMO1. Post-translationally, controlled by regulated intramembrane proteolysis (RIP). Undergoes metalloprotease-dependent constitutive ectodomain shedding to produce a membrane-anchored 52 kDa C-Terminal fragment which is further processed by presenilin gamma-secretase to yield an intracellular 50 kDa fragment.

Its subcellular location is the cell membrane. It carries out the reaction L-tyrosyl-[protein] + ATP = O-phospho-L-tyrosyl-[protein] + ADP + H(+). Activated by autophosphorylation at Tyr-1162, Tyr-1166 and Tyr-1167 on the kinase activation loop; phosphorylation at all three tyrosine residues is required for optimal kinase activity. Inhibited by MSC1609119A-1, BMS-754807, PQIP, benzimidazole pyridinone, isoquinolinedione, bis-azaindole, 3-cyanoquinoline, 2,4-bis-arylamino-1,3-pyrimidine, pyrrolopyrimidine, pyrrole-5-carboxaldehyde, picropodophyllin (PPP), tyrphostin derivatives. While most inhibitors bind to the ATP binding pocket, MSC1609119A-1 functions as allosteric inhibitor and binds close to the DFG motif and the activation loop. Dephosphorylated by PTPN1. In terms of biological role, receptor tyrosine kinase which mediates actions of insulin-like growth factor 1 (IGF1). Binds IGF1 with high affinity and IGF2 and insulin (INS) with a lower affinity. The activated IGF1R is involved in cell growth and survival control. IGF1R is crucial for tumor transformation and survival of malignant cell. Ligand binding activates the receptor kinase, leading to receptor autophosphorylation, and tyrosines phosphorylation of multiple substrates, that function as signaling adapter proteins including, the insulin-receptor substrates (IRS1/2), Shc and 14-3-3 proteins. Phosphorylation of IRSs proteins lead to the activation of two main signaling pathways: the PI3K-AKT/PKB pathway and the Ras-MAPK pathway. The result of activating the MAPK pathway is increased cellular proliferation, whereas activating the PI3K pathway inhibits apoptosis and stimulates protein synthesis. Phosphorylated IRS1 can activate the 85 kDa regulatory subunit of PI3K (PIK3R1), leading to activation of several downstream substrates, including protein AKT/PKB. AKT phosphorylation, in turn, enhances protein synthesis through mTOR activation and triggers the antiapoptotic effects of IGFIR through phosphorylation and inactivation of BAD. In parallel to PI3K-driven signaling, recruitment of Grb2/SOS by phosphorylated IRS1 or Shc leads to recruitment of Ras and activation of the ras-MAPK pathway. In addition to these two main signaling pathways IGF1R signals also through the Janus kinase/signal transducer and activator of transcription pathway (JAK/STAT). Phosphorylation of JAK proteins can lead to phosphorylation/activation of signal transducers and activators of transcription (STAT) proteins. In particular activation of STAT3, may be essential for the transforming activity of IGF1R. The JAK/STAT pathway activates gene transcription and may be responsible for the transforming activity. JNK kinases can also be activated by the IGF1R. IGF1 exerts inhibiting activities on JNK activation via phosphorylation and inhibition of MAP3K5/ASK1, which is able to directly associate with the IGF1R. When present in a hybrid receptor with INSR, binds IGF1. The protein is Insulin-like growth factor 1 receptor (Igf1r) of Rattus norvegicus (Rat).